The primary structure comprises 3527 residues: BEACH domain-containing protein A2 (3527 aa).

Disordered stretches follow at residues 25 to 46 (AGEA…PSSS), 385 to 423 (SSPH…LNSR), and 454 to 490 (ESSG…CEQG). Residues 28-46 (AISDPTTPPSSSQASPSSS) show a composition bias toward low complexity. Low complexity predominate over residues 455–469 (SSGTSTSLLSQTKLT). Residues 472-481 (SRRQTPSANN) are compositionally biased toward polar residues. LRR repeat units follow at residues 1447-1470 (KLES…NYED), 1499-1522 (FSHL…VLSN), 1542-1565 (SIQI…SHNL), 1566-1588 (AILR…DVEV), and 2001-2024 (SSEM…SRSS). Disordered regions lie at residues 1992–2023 (GDHV…DSRS) and 2046–2081 (IPSP…SQGS). Polar residues predominate over residues 1998–2020 (VSASSEMKSLDLTGSSSQVQPID). LRR repeat units follow at residues 2128–2151 (TEQI…VDPE), 2221–2247 (LLSI…LLSI), and 2313–2336 (VSAV…LDTD). The segment at 2658–2680 (VNTDEKSETGSPIKSSSGKMDEI) is disordered. Positions 2666–2675 (TGSPIKSSSG) are enriched in polar residues. Residues 2704-2871 (EHLEKIRFRY…EREEVFRNLL (168 aa)) form the BEACH-type PH domain. The BEACH domain occupies 2896 to 3188 (GSRLFKLMAK…QLFQKPHVKR (293 aa)). WD repeat units follow at residues 3272–3311 (HEGN…PRGS), 3322–3361 (AHTA…FVRQ), 3410–3451 (DLIV…DPVS), and 3483–3522 (FHKQ…LKAS).

This Arabidopsis thaliana (Mouse-ear cress) protein is BEACH domain-containing protein A2.